A 242-amino-acid polypeptide reads, in one-letter code: Adapter protein MecA (242 aa).

The protein belongs to the MecA family. As to quaternary structure, homodimer.

Functionally, enables the recognition and targeting of unfolded and aggregated proteins to the ClpC protease or to other proteins involved in proteolysis. The chain is Adapter protein MecA from Streptococcus gordonii (strain Challis / ATCC 35105 / BCRC 15272 / CH1 / DL1 / V288).